Here is a 471-residue protein sequence, read N- to C-terminus: V-type ATP synthase beta chain (471 aa).

It belongs to the ATPase alpha/beta chains family.

Produces ATP from ADP in the presence of a proton gradient across the membrane. The V-type beta chain is a regulatory subunit. The polypeptide is V-type ATP synthase beta chain (Streptococcus pyogenes serotype M28 (strain MGAS6180)).